The chain runs to 244 residues: Methylthioribulose-1-phosphate dehydratase (244 aa).

Cys104 contacts substrate. Zn(2+)-binding residues include His122 and His124. Glu148 serves as the catalytic Proton donor/acceptor. His204 contributes to the Zn(2+) binding site.

This sequence belongs to the aldolase class II family. MtnB subfamily. Zn(2+) serves as cofactor.

It localises to the cytoplasm. The enzyme catalyses 5-(methylsulfanyl)-D-ribulose 1-phosphate = 5-methylsulfanyl-2,3-dioxopentyl phosphate + H2O. The protein operates within amino-acid biosynthesis; L-methionine biosynthesis via salvage pathway; L-methionine from S-methyl-5-thio-alpha-D-ribose 1-phosphate: step 2/6. Its function is as follows. Catalyzes the dehydration of methylthioribulose-1-phosphate (MTRu-1-P) into 2,3-diketo-5-methylthiopentyl-1-phosphate (DK-MTP-1-P). The polypeptide is Methylthioribulose-1-phosphate dehydratase (Cryptococcus neoformans var. neoformans serotype D (strain B-3501A) (Filobasidiella neoformans)).